Reading from the N-terminus, the 907-residue chain is Cytochrome b561, DM13 and DOMON domain-containing protein At5g54830 (907 aa).

Residues 1–24 (MCDQRPNLLGSLVLLGFFIFFVNG) form the signal peptide. A DM13 domain is found at 31–139 (SSLIGHESEF…ASDFGHVLLS (109 aa)). The interval 144–172 (SDTSKAESPPSESNDVAPGKSNNSEPFKA) is disordered. Residues 153–168 (PSESNDVAPGKSNNSE) show a composition bias toward polar residues. DOMON domains lie at 184–329 (DKYR…WALG) and 524–645 (QQVK…WAMG). In terms of domain architecture, Cytochrome b561 spans 653–850 (LTERNMHSVT…CVVTVAYLEY (198 aa)). A helical transmembrane segment spans residues 685–705 (VLGVHGFMMFLAWGILLPGGI). Heme b is bound by residues His-689 and His-723. Transmembrane regions (helical) follow at residues 730-750 (GLAI…GFSF), 754-774 (HVKF…NAWL), 795-815 (SHSI…FTGM), and 829-849 (GLNL…AYLE). The heme b site is built by His-754 and His-796. Over residues 884–897 (GGFRDKDDEDRNGG) the composition is skewed to basic and acidic residues. The disordered stretch occupies residues 884-907 (GGFRDKDDEDRNGGRMEIQLEPLK).

It depends on heme b as a cofactor.

The protein localises to the membrane. May act as a catecholamine-responsive trans-membrane electron transporter. The polypeptide is Cytochrome b561, DM13 and DOMON domain-containing protein At5g54830 (Arabidopsis thaliana (Mouse-ear cress)).